The chain runs to 78 residues: Translation initiation factor IF-1, chloroplastic (78 aa).

An S1-like domain is found at 1 to 73 (MASNRELIEM…TKGRIIYRLR (73 aa)).

It belongs to the IF-1 family. Component of the 30S ribosomal translation pre-initiation complex which assembles on the 30S ribosome in the order IF-2 and IF-3, IF-1 and N-formylmethionyl-tRNA(fMet); mRNA recruitment can occur at any time during PIC assembly.

Its subcellular location is the plastid. It localises to the chloroplast. In terms of biological role, one of the essential components for the initiation of protein synthesis. Stabilizes the binding of IF-2 and IF-3 on the 30S subunit to which N-formylmethionyl-tRNA(fMet) subsequently binds. Helps modulate mRNA selection, yielding the 30S pre-initiation complex (PIC). Upon addition of the 50S ribosomal subunit IF-1, IF-2 and IF-3 are released leaving the mature 70S translation initiation complex. This Ostreococcus tauri protein is Translation initiation factor IF-1, chloroplastic.